The primary structure comprises 354 residues: Guanine nucleotide-binding protein G(o) subunit alpha (354 aa).

Gly2 carries N-myristoyl glycine lipidation. Residue Cys3 is the site of S-palmitoyl cysteine attachment. Residues 32–354 (KDVKLLLLGA…ANNLRGCGLY (323 aa)) enclose the G-alpha domain. The tract at residues 35–48 (KLLLLGAGESGKST) is G1 motif. GTP-binding residues include Glu43, Lys46, Ser47, Thr48, Ser152, Leu176, Arg177, Thr178, and Arg179. Ser47 contacts Mg(2+). The interval 174–182 (DILRTRVKT) is G2 motif. A Mg(2+)-binding site is contributed by Thr182. A G3 motif region spans residues 197 to 206 (FRLFDVGGQR). The residue at position 205 (Gln205) is a 5-glutamyl histamine. Residues 266-273 (ILFLNKKD) are G4 motif. Positions 270, 273, and 325 each coordinate GTP. A G5 motif region spans residues 324–329 (TCATDT). At Asn346 the chain carries Deamidated asparagine; in form Alpha-3. Cys351 carries S-palmitoyl cysteine lipidation.

The protein belongs to the G-alpha family. G(i/o/t/z) subfamily. As to quaternary structure, g proteins are composed of 3 units; alpha, beta and gamma. The alpha chain contains the guanine nucleotide binding site. Forms a complex with GNB1 and GNG3. Interacts with RGS14. Interacts with RGS16. Interacts with RGS19. Interacts (when palmitoylated) with ADGRG3. In terms of processing, deamidation of Asn-346 converts alpha-1 to alpha-3. Histaminylated at Gln-205 residues by TGM2.

The protein localises to the cell membrane. It is found in the membrane. It carries out the reaction GTP + H2O = GDP + phosphate + H(+). With respect to regulation, the GTPase activity is promoted by GTPAse activators, such as RGS14, RGS16 and RGS19. In terms of biological role, guanine nucleotide-binding proteins (G proteins) function as transducers downstream of G protein-coupled receptors (GPCRs) in numerous signaling cascades. The alpha chain contains the guanine nucleotide binding site and alternates between an active, GTP-bound state and an inactive, GDP-bound state. Signaling by an activated GPCR promotes GDP release and GTP binding. The alpha subunit has a low GTPase activity that converts bound GTP to GDP, thereby terminating the signal. Both GDP release and GTP hydrolysis are modulated by numerous regulatory proteins. Signaling is mediated via effector proteins, such as adenylate cyclase. Inhibits adenylate cyclase activity, leading to decreased intracellular cAMP levels. In Cricetulus longicaudatus (Long-tailed dwarf hamster), this protein is Guanine nucleotide-binding protein G(o) subunit alpha (GNAO1).